We begin with the raw amino-acid sequence, 248 residues long: MAAQSAPKVVLKSTTKMSLNERFTNMLKNKQPTPVNIRASMQQQQQLASARNRRLAQQMENRPSVQAALKLKQSLKQRLGKSNIQARLGRPIGALARGAIGGRGLPIIQRGLPRGGLRGGRATRTLLRGGMSLRGQNLLRGGRAVAPRMGLRRGGVRGRGGPGRGGLGRGAMGRGGIGGRGRGMIGRGRGGFGGRGRGRGRGRGALARPVLTKEQLDNQLDAYMSKTKGHLDAELDAYMAQTDPETND.

Ala2 carries the post-translational modification N-acetylalanine. A Phosphothreonine modification is found at Thr33. 3 positions are modified to phosphoserine: Ser40, Ser49, and Ser64. Lys70 is covalently cross-linked (Glycyl lysine isopeptide (Lys-Gly) (interchain with G-Cter in SUMO2)). Positions 151–204 (LRRGGVRGRGGPGRGGLGRGAMGRGGIGGRGRGMIGRGRGGFGGRGRGRGRGRG) are disordered. The interval 153 to 206 (RGGVRGRGGPGRGGLGRGAMGRGGIGGRGRGMIGRGRGGFGGRGRGRGRGRGAL) is interaction with PRMT1. A compositionally biased stretch (gly residues) spans 157–195 (RGRGGPGRGGLGRGAMGRGGIGGRGRGMIGRGRGGFGGR). The GAR motif; involved in 5hmC binding signature appears at 194–203 (GRGRGRGRGR). The residue at position 242 (Thr242) is a Phosphothreonine.

Interacts with PRMT1 and PRMT5. Interacts with the 5FMC complex; the interaction is methylation-dependent. Interacts with FYTTD1, SET and PRC1 complex members CBX4, RNF2 and PHC2; the interactions are methylation-independent. Interacts with ZNF148. Component of the transcription/export (TREX) complex at least composed of ALYREF/THOC4, DDX39B, SARNP/CIP29, CHTOP and the THO subcomplex; TREX seems to have dynamic structure involving ATP-dependent remodeling; in the complex interacts (methylated) with ALYREF/THOC4 and with DDX39B in a methylation-independent manner. Interacts (methylated) with NXF1; the interaction is mutually exclusive with the NXF1:THOC5 interaction. Interacts with WDR77 and ERH. Asymmetrically methylated by PRMT1. Symmetrically methylated by PRMT5. As to expression, expressed in an erythroid progenitor cell line derived from peripheral blood. Expressed in glioblastoma cells.

It is found in the nucleus. Its subcellular location is the nucleolus. The protein localises to the nucleoplasm. The protein resides in the nucleus speckle. Its function is as follows. Plays an important role in the ligand-dependent activation of estrogen receptor target genes. May play a role in the silencing of fetal globin genes. Recruits the 5FMC complex to ZNF148, leading to desumoylation of ZNF148 and subsequent transactivation of ZNF148 target genes. Plays an important role in the tumorigenicity of glioblastoma cells. Binds to 5-hydroxymethylcytosine (5hmC) and associates with the methylosome complex containing PRMT1, PRMT5, MEP50 and ERH. The CHTOP-methylosome complex associated with 5hmC is recruited to selective sites on the chromosome, where it methylates H4R3 and activates the transcription of genes involved in glioblastomagenesis. Required for effective mRNA nuclear export and is a component of the TREX complex which is thought to couple mRNA transcription, processing and nuclear export, and specifically associates with spliced mRNA and not with unspliced pre-mRNA. TREX is recruited to spliced mRNAs by a transcription-independent mechanism, binds to mRNA upstream of the exon-junction complex (EJC) and is recruited in a splicing- and cap-dependent manner to a region near the 5' end of the mRNA where it functions in mRNA export to the cytoplasm via the TAP/NFX1 pathway. The TREX complex is essential for the export of Kaposi's sarcoma-associated herpesvirus (KSHV) intronless mRNAs and infectious virus production. Stimulates DDX39B ATPase and helicase activities. In cooperation with ALYREF/THOC4 enhances NXF1 RNA binding activity. The protein is Chromatin target of PRMT1 protein (CHTOP) of Homo sapiens (Human).